The following is a 270-amino-acid chain: Sulfur carrier protein FdhD (270 aa).

Basic and acidic residues-rich tracts occupy residues 1 to 10 (MSMQDHDRTE) and 20 to 30 (RHLDGSSRPDW). Residues 1–30 (MSMQDHDRTEQGMTSLAVTRHLDGSSRPDW) are disordered. Cys-117 acts as the Cysteine persulfide intermediate in catalysis.

The protein belongs to the FdhD family.

The protein localises to the cytoplasm. Functionally, required for formate dehydrogenase (FDH) activity. Acts as a sulfur carrier protein that transfers sulfur from IscS to the molybdenum cofactor prior to its insertion into FDH. This chain is Sulfur carrier protein FdhD, found in Chromobacterium violaceum (strain ATCC 12472 / DSM 30191 / JCM 1249 / CCUG 213 / NBRC 12614 / NCIMB 9131 / NCTC 9757 / MK).